The sequence spans 313 residues: Transcription factor MafB (313 aa).

2 disordered regions span residues glutamine 51–threonine 77 and methionine 151–arginine 197. Residues serine 55 to proline 76 show a composition bias toward low complexity. A compositionally biased stretch (basic residues) spans proline 154–histidine 166. Residues glutamine 167–serine 192 show a composition bias toward low complexity. Residues arginine 225–lysine 250 form a basic motif region. A bZIP domain is found at arginine 225–leucine 288. Residues leucine 253–leucine 274 are leucine-zipper. A disordered region spans residues asparagine 292–methionine 313.

This sequence belongs to the bZIP family. Maf subfamily. As to quaternary structure, homodimer or heterodimer with other bHLH-Zip transcription factors. Binds DNA as a homodimer or a heterodimer.

Its subcellular location is the nucleus. Its function is as follows. Acts as a transcriptional activator or repressor. Implicated in the regulation of cell-type specific gene expression and play a role in inductive events during lens development. This is Transcription factor MafB (mafb) from Xenopus laevis (African clawed frog).